Here is a 379-residue protein sequence, read N- to C-terminus: Homoserine O-succinyltransferase (379 aa).

The AB hydrolase-1 domain occupies 48-357; sequence NAVLICHALS…SAHGHDAFLM (310 aa). Ser-154 serves as the catalytic Nucleophile. Arg-224 serves as a coordination point for substrate. Active-site residues include Asp-319 and His-352. Asp-353 is a binding site for substrate.

This sequence belongs to the AB hydrolase superfamily. MetX family. As to quaternary structure, homodimer.

The protein resides in the cytoplasm. The enzyme catalyses L-homoserine + succinyl-CoA = O-succinyl-L-homoserine + CoA. It functions in the pathway amino-acid biosynthesis; L-methionine biosynthesis via de novo pathway; O-succinyl-L-homoserine from L-homoserine: step 1/1. Transfers a succinyl group from succinyl-CoA to L-homoserine, forming succinyl-L-homoserine. This is Homoserine O-succinyltransferase from Neisseria meningitidis serogroup A / serotype 4A (strain DSM 15465 / Z2491).